The primary structure comprises 282 residues: Urease accessory protein UreD (282 aa).

The protein belongs to the UreD family. As to quaternary structure, ureD, UreF and UreG form a complex that acts as a GTP-hydrolysis-dependent molecular chaperone, activating the urease apoprotein by helping to assemble the nickel containing metallocenter of UreC. The UreE protein probably delivers the nickel.

It is found in the cytoplasm. Functionally, required for maturation of urease via the functional incorporation of the urease nickel metallocenter. This is Urease accessory protein UreD from Methylobacterium sp. (strain 4-46).